Here is a 300-residue protein sequence, read N- to C-terminus: MTAVLPLPLPLADPAPRTPRLQREPLRLAKRLRHAVGQAIADFGMIAPGDKVMVCLSGGKDSYTLLDMLLQLQRSAPVPFTLVAVNLDQKQPDFPADVLPTYLRAQQVPFDIIEQDTYSVVSRVIPQGKTMCSLCSRLRRGALYAYAQAHGVTKIALGHHRDDIVATFFMNLFHHARLAAMAPKLRSDDGAHVVIRPLAYVREADIAAYAQARHFPIIPCNLCGSQENLQRQQVGRMLQQWDREQPGRVDQIARALGDVRPEQLADRTLFDFPGLGGGADAPLPDAAGWLAGSAAEHARD.

The short motif at 57–62 is the PP-loop motif element; that stretch reads SGGKDS. Positions 132, 135, and 223 each coordinate [4Fe-4S] cluster.

This sequence belongs to the TtcA family. As to quaternary structure, homodimer. Mg(2+) serves as cofactor. [4Fe-4S] cluster is required as a cofactor.

The protein localises to the cytoplasm. It carries out the reaction cytidine(32) in tRNA + S-sulfanyl-L-cysteinyl-[cysteine desulfurase] + AH2 + ATP = 2-thiocytidine(32) in tRNA + L-cysteinyl-[cysteine desulfurase] + A + AMP + diphosphate + H(+). Its pathway is tRNA modification. Its function is as follows. Catalyzes the ATP-dependent 2-thiolation of cytidine in position 32 of tRNA, to form 2-thiocytidine (s(2)C32). The sulfur atoms are provided by the cysteine/cysteine desulfurase (IscS) system. This Xanthomonas campestris pv. campestris (strain B100) protein is tRNA-cytidine(32) 2-sulfurtransferase.